An 855-amino-acid chain; its full sequence is DNA mismatch repair protein MutS (855 aa).

Position 616–623 (616–623 (GPNMGGKS)) interacts with ATP.

The protein belongs to the DNA mismatch repair MutS family.

Its function is as follows. This protein is involved in the repair of mismatches in DNA. It is possible that it carries out the mismatch recognition step. This protein has a weak ATPase activity. This Salmonella gallinarum (strain 287/91 / NCTC 13346) protein is DNA mismatch repair protein MutS.